Reading from the N-terminus, the 370-residue chain is Cobalt-precorrin-5B C(1)-methyltransferase (370 aa).

Belongs to the CbiD family.

The enzyme catalyses Co-precorrin-5B + S-adenosyl-L-methionine = Co-precorrin-6A + S-adenosyl-L-homocysteine. It participates in cofactor biosynthesis; adenosylcobalamin biosynthesis; cob(II)yrinate a,c-diamide from sirohydrochlorin (anaerobic route): step 6/10. Catalyzes the methylation of C-1 in cobalt-precorrin-5B to form cobalt-precorrin-6A. The protein is Cobalt-precorrin-5B C(1)-methyltransferase of Prochlorococcus marinus (strain MIT 9312).